The chain runs to 112 residues: Truncated ankyrin repeat protein B25 (112 aa).

This sequence belongs to the orthopoxviruses B25 protein family.

In Bos taurus (Bovine), this protein is Truncated ankyrin repeat protein B25.